Here is a 1712-residue protein sequence, read N- to C-terminus: Neurexin-2 (1712 aa).

The signal sequence occupies residues 1 to 28 (MASGSRWRPTPPPLLLLLLLALAARADG). The Laminin G-like 1 domain maps to 29–206 (LEFGGGPGQW…LRGATADPLC (178 aa)). Residues 29 to 1636 (LEFGGGPGQW…EVIRESSSTT (1608 aa)) lie on the Extracellular side of the membrane. N-linked (GlcNAc...) asparagine glycosylation is present at Asn60. One can recognise an EGF-like 1 domain in the interval 202–242 (ADPLCAPARNPCANGGLCTVLAPGEVGCDCSHTGFGGKFCS). 3 disulfides stabilise this stretch: Cys206-Cys219, Cys213-Cys229, and Cys231-Cys241. Laminin G-like domains lie at 289 to 486 (VATF…SFRC) and 493 to 686 (DPVT…APFC). Residue Asp335 participates in Ca(2+) binding. Residue Asn338 is glycosylated (N-linked (GlcNAc...) asparagine). Positions 352 and 420 each coordinate Ca(2+). Cystine bridges form between Cys450–Cys486, Cys657–Cys686, Cys694–Cys705, Cys699–Cys714, and Cys716–Cys726. Positions 690-727 (TLKQCASAPCRNGGVCREGWNRFICDCIGTGFLGRVCE) constitute an EGF-like 2 domain. Laminin G-like domains lie at 732–904 (VLSY…ITYC) and 918–1093 (DPVT…ERGC). Ca(2+) contacts are provided by Asp779 and Leu796. The N-linked (GlcNAc...) asparagine glycan is linked to Asn841. Arg854 contributes to the Ca(2+) binding site. Cystine bridges form between Cys1065-Cys1093, Cys1100-Cys1111, Cys1105-Cys1120, and Cys1122-Cys1132. An EGF-like 3 domain is found at 1096 to 1133 (PSTTCTEESCANQGVCLQQWDGFTCDCTMTSYGGPVCN). The Laminin G-like 6 domain occupies 1137–1345 (TTYIFGKGGA…HLRLVGEGPS (209 aa)). Ca(2+) contacts are provided by Asp1189 and Val1206. N-linked (GlcNAc...) asparagine glycosylation occurs at Asn1236. Ile1288 and Asn1290 together coordinate Ca(2+). The disordered stretch occupies residues 1373–1392 (ATTTTRRGRSPTLRDSTTQN). O-linked (Xyl...) (heparan sulfate) serine glycosylation is present at Ser1400. 2 disordered regions span residues 1458–1489 (ATQD…CEEP) and 1525–1626 (TLLS…PGAV). A helical membrane pass occupies residues 1637–1657 (GMVVGIVAAAALCILILLYAM). Residues 1658 to 1712 (YKYRNRDEGSYQVDQSRNYISNSAQSNGAVVKEKAPAAPKTPSKAKKNKDKEYYV) lie on the Cytoplasmic side of the membrane. A disordered region spans residues 1679–1712 (NSAQSNGAVVKEKAPAAPKTPSKAKKNKDKEYYV).

This sequence belongs to the neurexin family. In terms of assembly, the laminin G-like domain 1 binds to NXPH1. Interacts with PATJ. Interacts with CBLN1, CBLN2 and, less avidly, with CBLN4. Specific isoforms bind neuroligins NLGN1, NLGN2 and NLGN3. Specific isoforms bind to alpha-dystroglycan. Interacts (via Laminin G-like 1 domain) with IGSF21 (Ig-like 1 domain) in a trans-interaction manner. Interacts with CLSTN3. Post-translationally, O-glycosylated; contains heparan sulfate. Heparan sulfate attachment is required for synapse development by mediating interactions with neuroligins. In terms of tissue distribution, predominantly expressed in brain.

It is found in the presynaptic cell membrane. Functionally, neuronal cell surface protein that may be involved in cell recognition and cell adhesion. May mediate intracellular signaling. The sequence is that of Neurexin-2 (NRXN2) from Homo sapiens (Human).